We begin with the raw amino-acid sequence, 498 residues long: MLSSSSLYAAIDLGSNSFHMLVARETAGSIQTLAKIKRKVRLAAGLDKQNRLSQDAMQRGWQCLQLFSERLQDIPQDQVRVVATATLRLATNADEFLQRAQEILGLPIQVISGEEEARLIYQGVAHTTGGPDARLVVDIGGGSTELATGVGAKTTQLISLPMGCVTWLDRYFSDRNLEAGNFERAEQAAREMLRPVAASLREQGWQICVGASGTVQALQEIMVAQGMDEYITLPKLRQLKEHAIQCDKLEELEIEGLTLERALVFPSGLAILLAIFQELDIKTMTLAGGALREGLVYGMLHLPVDQDIRHRTLATLQRRYLLDVEQAKRVSTLADNFLQQVARDWQLDNRCRELLRSACLVHEIGLSIDFRQSPQHAAYLIRHSDLPGFTPAQKKLLATLLQNQINPVDLMPLSQQNALPVNQAQRLCRLLRLAIIFASRRRDDTLPAVRLRVEGETLRLILPAGWLSQHPLRAEMLEQESRWQSYVHWPLMLEETPA.

It belongs to the GppA/Ppx family. GppA subfamily.

It carries out the reaction guanosine 3'-diphosphate 5'-triphosphate + H2O = guanosine 3',5'-bis(diphosphate) + phosphate + H(+). It participates in purine metabolism; ppGpp biosynthesis; ppGpp from GTP: step 2/2. Catalyzes the conversion of pppGpp to ppGpp. Guanosine pentaphosphate (pppGpp) is a cytoplasmic signaling molecule which together with ppGpp controls the 'stringent response', an adaptive process that allows bacteria to respond to amino acid starvation, resulting in the coordinated regulation of numerous cellular activities. The polypeptide is Guanosine-5'-triphosphate,3'-diphosphate pyrophosphatase (Pectobacterium carotovorum subsp. carotovorum (strain PC1)).